A 490-amino-acid chain; its full sequence is Glutamyl-tRNA(Gln) amidotransferase subunit A (490 aa).

Active-site charge relay system residues include K78 and S158. The active-site Acyl-ester intermediate is S182.

This sequence belongs to the amidase family. GatA subfamily. Heterotrimer of A, B and C subunits.

The catalysed reaction is L-glutamyl-tRNA(Gln) + L-glutamine + ATP + H2O = L-glutaminyl-tRNA(Gln) + L-glutamate + ADP + phosphate + H(+). Functionally, allows the formation of correctly charged Gln-tRNA(Gln) through the transamidation of misacylated Glu-tRNA(Gln) in organisms which lack glutaminyl-tRNA synthetase. The reaction takes place in the presence of glutamine and ATP through an activated gamma-phospho-Glu-tRNA(Gln). The chain is Glutamyl-tRNA(Gln) amidotransferase subunit A from Caulobacter sp. (strain K31).